A 616-amino-acid polypeptide reads, in one-letter code: Fatty acyl-CoA reductase 2, chloroplastic (616 aa).

The transit peptide at 1–14 directs the protein to the chloroplast; that stretch reads MEALFLSSSSSSIV. An NAD(P)H-binding motif is present at residues 133-143; sequence FLITGSTGFLA. Catalysis depends on residues Tyr-357 and Lys-361.

Belongs to the fatty acyl-CoA reductase family. Expressed in the tapetum of anthers.

Its subcellular location is the plastid. It localises to the chloroplast. The enzyme catalyses a long-chain fatty acyl-CoA + 2 NADPH + 2 H(+) = a long-chain primary fatty alcohol + 2 NADP(+) + CoA. The catalysed reaction is hexadecanoyl-CoA + 2 NADPH + 2 H(+) = hexadecan-1-ol + 2 NADP(+) + CoA. It carries out the reaction hexadecanoyl-[ACP] + 2 NADPH + 2 H(+) = hexadecan-1-ol + holo-[ACP] + 2 NADP(+). In terms of biological role, catalyzes the reduction of fatty acyl-CoA and -ACP (acyl carrier protein) substrates to fatty alcohols. Triggers the accumulation of C16 and C18 fatty alcohols; converts palmitoyl-acyl carrier protein to the corresponding C16:0 alcohol with NAD(P)H as electron donor, but seems inactive toward palmitoyl- or other acyl-coenzyme A. Also triggers the formation of some C16:0 aldehydes. Involved in the synthesis of the lipid component in sporopollenin. Required for exine patterning of pollen grain by mediating the formation of pollen wall substances. The sequence is that of Fatty acyl-CoA reductase 2, chloroplastic from Arabidopsis thaliana (Mouse-ear cress).